Here is a 506-residue protein sequence, read N- to C-terminus: Sugar transport protein 5 (506 aa).

The Cytoplasmic portion of the chain corresponds to 1–19; it reads MAGGGLALDVSSAGNIDAK. 12 helical membrane-spanning segments follow: residues 20–40, 81–101, 117–137, 141–161, 168–188, 201–221, 287–307, 325–345, 352–372, 390–410, 430–450, and 456–476; these read ITAAVVMSCIVAASCGLIFGY, LLTAFTSSLYVAGLVASLVAS, GFTFLFGALINGLAANIAMLI, ILLGFGVGFTNQAAPVYLSEV, GAFNIGFSCFISMGVVAANLI, ISLGLAAVPAAIMTVGCLFIS, LVVAVVIPCFQQLTGITVNAF, IATFILGFVNLGSLLLSTMVI, FLFIAGGILMLLCQIAVAVLL, VTVVVLLCIYAAGFGWSWGPL, LSVAVNFAATFALSQTFLATL, and GAFLFYGGWIFTMTIFVIMFL. The Cytoplasmic segment spans residues 477 to 506; the sequence is PETKGIPVDSMYQVWEKHWYWQRFTKPTST.

The protein belongs to the major facilitator superfamily. Sugar transporter (TC 2.A.1.1) family.

It is found in the membrane. Mediates an active uptake of hexoses, probably by sugar/hydrogen symport. In Arabidopsis thaliana (Mouse-ear cress), this protein is Sugar transport protein 5 (STP5).